The following is a 113-amino-acid chain: UPF0102 protein CHU_0465 (113 aa).

It belongs to the UPF0102 family.

This chain is UPF0102 protein CHU_0465, found in Cytophaga hutchinsonii (strain ATCC 33406 / DSM 1761 / CIP 103989 / NBRC 15051 / NCIMB 9469 / D465).